A 253-amino-acid polypeptide reads, in one-letter code: Triosephosphate isomerase (253 aa).

A substrate-binding site is contributed by 8–10 (NWK). The active-site Electrophile is the histidine 93. Residue glutamate 165 is the Proton acceptor of the active site. Substrate is bound by residues glycine 171, serine 210, and 231–232 (GG).

This sequence belongs to the triosephosphate isomerase family. In terms of assembly, homodimer.

It localises to the cytoplasm. It catalyses the reaction D-glyceraldehyde 3-phosphate = dihydroxyacetone phosphate. It participates in carbohydrate biosynthesis; gluconeogenesis. It functions in the pathway carbohydrate degradation; glycolysis; D-glyceraldehyde 3-phosphate from glycerone phosphate: step 1/1. Involved in the gluconeogenesis. Catalyzes stereospecifically the conversion of dihydroxyacetone phosphate (DHAP) to D-glyceraldehyde-3-phosphate (G3P). This Francisella tularensis subsp. holarctica (strain FTNF002-00 / FTA) protein is Triosephosphate isomerase.